We begin with the raw amino-acid sequence, 293 residues long: Elongation factor Ts (293 aa).

Positions 79 to 82 (TDFV) are involved in Mg(2+) ion dislocation from EF-Tu.

The protein belongs to the EF-Ts family.

It is found in the cytoplasm. Associates with the EF-Tu.GDP complex and induces the exchange of GDP to GTP. It remains bound to the aminoacyl-tRNA.EF-Tu.GTP complex up to the GTP hydrolysis stage on the ribosome. This Exiguobacterium sibiricum (strain DSM 17290 / CCUG 55495 / CIP 109462 / JCM 13490 / 255-15) protein is Elongation factor Ts.